A 371-amino-acid chain; its full sequence is S-adenosylmethionine:tRNA ribosyltransferase-isomerase (371 aa).

It belongs to the QueA family. As to quaternary structure, monomer.

The protein localises to the cytoplasm. It carries out the reaction 7-aminomethyl-7-carbaguanosine(34) in tRNA + S-adenosyl-L-methionine = epoxyqueuosine(34) in tRNA + adenine + L-methionine + 2 H(+). Its pathway is tRNA modification; tRNA-queuosine biosynthesis. Functionally, transfers and isomerizes the ribose moiety from AdoMet to the 7-aminomethyl group of 7-deazaguanine (preQ1-tRNA) to give epoxyqueuosine (oQ-tRNA). The sequence is that of S-adenosylmethionine:tRNA ribosyltransferase-isomerase from Nitratidesulfovibrio vulgaris (strain DP4) (Desulfovibrio vulgaris).